The following is a 176-amino-acid chain: Inorganic pyrophosphatase (176 aa).

Substrate is bound by residues lysine 31, arginine 45, and tyrosine 57. Mg(2+) is bound by residues aspartate 67, aspartate 72, and aspartate 104. A substrate-binding site is contributed by tyrosine 141.

This sequence belongs to the PPase family. In terms of assembly, homohexamer. It depends on Mg(2+) as a cofactor.

The protein resides in the cytoplasm. It carries out the reaction diphosphate + H2O = 2 phosphate + H(+). Its function is as follows. Catalyzes the hydrolysis of inorganic pyrophosphate (PPi) forming two phosphate ions. This is Inorganic pyrophosphatase from Methanopyrus kandleri (strain AV19 / DSM 6324 / JCM 9639 / NBRC 100938).